The following is a 361-amino-acid chain: Anthranilate phosphoribosyltransferase (361 aa).

5-phospho-alpha-D-ribose 1-diphosphate is bound by residues Gly-80, 83–84 (GD), Thr-88, 90–93 (NVST), 108–116 (KHGNYSVSS), and Ser-120. Position 80 (Gly-80) interacts with anthranilate. Ser-92 provides a ligand contact to Mg(2+). Residue Asn-111 coordinates anthranilate. Arg-166 lines the anthranilate pocket. Residues Asp-224 and Glu-225 each contribute to the Mg(2+) site. The tract at residues 338–361 (EGDGEAASTDSAAASTTAGPEDDD) is disordered. Positions 343 to 355 (AASTDSAAASTTA) are enriched in low complexity.

It belongs to the anthranilate phosphoribosyltransferase family. As to quaternary structure, homodimer. The cofactor is Mg(2+).

The catalysed reaction is N-(5-phospho-beta-D-ribosyl)anthranilate + diphosphate = 5-phospho-alpha-D-ribose 1-diphosphate + anthranilate. It functions in the pathway amino-acid biosynthesis; L-tryptophan biosynthesis; L-tryptophan from chorismate: step 2/5. Its function is as follows. Catalyzes the transfer of the phosphoribosyl group of 5-phosphorylribose-1-pyrophosphate (PRPP) to anthranilate to yield N-(5'-phosphoribosyl)-anthranilate (PRA). This chain is Anthranilate phosphoribosyltransferase, found in Halorubrum lacusprofundi (strain ATCC 49239 / DSM 5036 / JCM 8891 / ACAM 34).